The following is a 350-amino-acid chain: Transmembrane protein 185A (350 aa).

7 helical membrane passes run 16-36 (LIYACLLLFSVLLALRLDGII), 41-61 (WAVFAPIWLWKLMVIVGASVG), 81-101 (FKAMLIAVGIHLLLLMFEVLV), 111-131 (FWLLVFMPLFFVSPVSVAACV), 177-197 (ILMSFLCLVVLYYIVWSVLFL), 211-231 (ITMALSWMTIVVPLLTFEILL), and 240-260 (AFSCIPIFVPLWLSLITLMAT). The interval 298–350 (DLHHEDSEETEETPVPEPPKIAPMFRKKARVVITQSPGKYVLPPPKLNIEMPD) is mediates interaction with MAP1B.

It belongs to the TMEM185 family. As to quaternary structure, interacts with MAP1B. As to expression, broadly expressed in brain where it is specifically expressed by neurons (at protein level). Also detected in some cells of arterioles, intestine, lung and testis (at protein level).

It is found in the cell projection. It localises to the dendrite. The protein resides in the membrane. This Mus musculus (Mouse) protein is Transmembrane protein 185A (Tmem185a).